We begin with the raw amino-acid sequence, 162 residues long: MKKKIIILFLFTAILCSITLCGCISFEKTQIGNYNIKNNSCINSNVSKNQTIQNVSDKIVNNNTNILNTLNYEIIAYGAFGEKNRGYYYYYKDNKTIIVINLEEMPTAGYKIKIINITETANKITVYYKVIPPKEFAAMVVTYPYIKLSVNGTYNVECKEVR.

Residues 5-25 (IIILFLFTAILCSITLCGCIS) traverse the membrane as a helical segment.

The protein resides in the membrane. This is an uncharacterized protein from Methanocaldococcus jannaschii (strain ATCC 43067 / DSM 2661 / JAL-1 / JCM 10045 / NBRC 100440) (Methanococcus jannaschii).